We begin with the raw amino-acid sequence, 360 residues long: Xanthohumol 4-O-methyltransferase (360 aa).

Asp-227 lines the S-adenosyl-L-methionine pocket. His-266 acts as the Proton acceptor in catalysis.

The protein belongs to the class I-like SAM-binding methyltransferase superfamily. Cation-independent O-methyltransferase family. In terms of assembly, homodimer. In terms of tissue distribution, highly expressed in lupulin glands. Detected in cones, male flowers and roots.

It localises to the cytoplasm. It catalyses the reaction xanthohumol + S-adenosyl-L-methionine = 4-O-methylxanthohumol + S-adenosyl-L-homocysteine + H(+). The enzyme catalyses desmethylxanthohumol + S-adenosyl-L-methionine = xanthohumol + S-adenosyl-L-homocysteine + H(+). The catalysed reaction is isoliquiritigenin + S-adenosyl-L-methionine = 2'-O-methylisoliquiritigenin + S-adenosyl-L-homocysteine + H(+). It carries out the reaction trans-resveratrol + S-adenosyl-L-methionine = 3-methoxy-4',5-dihydroxy-trans-stilbene + S-adenosyl-L-homocysteine + H(+). It participates in secondary metabolite biosynthesis. Inhibited by S-adenosyl homocysteine. Functionally, involved in the biosynthesis of prenylated phenolics natural products which contribute to the bitter taste of beer and display broad biological activities. O-methyltransferase with a low substrate selectivity. Methylates chalconaringenin, desmethylxanthohumol, xanthohumol, isoliquiritigenin, butein, 2',4-dihydroxychalcone, resveratrol, genistein and guaiacol. Catalyzes the biosynthesis of 2',4'-dihydroxy-4,6'-dimethoxy-3'-prenylchalcone (4-O-methylxanthohumol). The polypeptide is Xanthohumol 4-O-methyltransferase (Humulus lupulus (European hop)).